The following is a 1208-amino-acid chain: Defective chorion protein, FC125 isoform (1208 aa).

Residues 1-19 (MRLFSLLPLLALLVVQAAG) form the signal peptide. 3 disordered regions span residues 23–60 (VTSD…PSIN), 184–212 (APAP…PDAP), and 268–294 (PAQP…EDPY). The span at 32 to 41 (AGSTTNSTTD) shows a compositional bias: polar residues. Positions 268 to 280 (PAQPAAAGTDAQA) are enriched in low complexity. 5 tandem repeats follow at residues 493 to 518 (QNPM…QQIQ), 519 to 544 (QNPM…QQIQ), 545 to 570 (QNPM…QQIQ), 571 to 596 (QNPM…QQIQ), and 597 to 622 (QNPM…QQIQ). The tract at residues 493-788 (QNPMMMQQRQ…IQQQQRQMMQ (296 aa)) is 12 X 26 AA approximate tandem repeats, Glu, Met-rich. One copy of the 6; approximate repeat lies at 623 to 652 (QNPMMMQQRQWSEEQAKIQHDQQMAQQMAQ). Residues 653–680 (QGLMMTEQRQRQWSEDQAKIQQAQQMAQ) form a 7; approximate repeat. One copy of the 8; approximate repeat lies at 681–696 (QTPMMMPQMQQRQWTE). A 9; approximate repeat occupies 697 to 720 (DPQMVQQMQQRQWAEDQTRMQMAQ). Residues 721 to 733 (QNPMMQQQRQMAE) form a 10; approximate repeat. The 11; approximate repeat unit spans residues 734–758 (NPQMMQQRQWSEEQTKIEQAQQMAQ). One copy of the 12; approximate repeat lies at 759–788 (QNQMMMQQMQQRQWSEDQAQIQQQQRQMMQ). A compositionally biased stretch (acidic residues) spans 828–839 (EDEDNKAEDDLV). Disordered stretches follow at residues 828–875 (EDED…SKSA), 944–1010 (RTIN…GSIF), and 1114–1208 (VQPP…DVDD). A compositionally biased stretch (polar residues) spans 957–977 (SESQKSNSNPPTTLTPAPQEQ). Acidic residues-rich tracts occupy residues 1163-1178 (PEPD…EPSE) and 1194-1208 (NDID…DVDD).

The protein localises to the secreted. Required for proper assembly of the eggshell. The protein is Defective chorion protein, FC125 isoform of Drosophila melanogaster (Fruit fly).